The chain runs to 141 residues: Hemoglobin subunit alpha (141 aa).

The region spanning 1-141 (VLSSADKNNI…VSTVLTSKYR (141 aa)) is the Globin domain. Ser-3 is modified (phosphoserine). N6-succinyllysine is present on residues Lys-7 and Lys-11. Lys-16 is subject to N6-acetyllysine; alternate. Residue Lys-16 is modified to N6-succinyllysine; alternate. Position 24 is a phosphotyrosine (Tyr-24). Ser-35 is subject to Phosphoserine. Lys-40 carries the N6-succinyllysine modification. At Ser-49 the chain carries Phosphoserine. His-58 serves as a coordination point for O2. His-87 contacts heme b. At Ser-102 the chain carries Phosphoserine. Phosphothreonine is present on residues Thr-108, Thr-134, and Thr-137. Ser-138 bears the Phosphoserine mark.

Belongs to the globin family. As to quaternary structure, heterotetramer of two alpha chains and two beta chains. As to expression, red blood cells.

In terms of biological role, involved in oxygen transport from the lung to the various peripheral tissues. Hemopressin acts as an antagonist peptide of the cannabinoid receptor CNR1. Hemopressin-binding efficiently blocks cannabinoid receptor CNR1 and subsequent signaling. In Paguma larvata (Masked palm civet), this protein is Hemoglobin subunit alpha (HBA).